The sequence spans 250 residues: 3-deoxy-manno-octulosonate cytidylyltransferase (250 aa).

This sequence belongs to the KdsB family.

Its subcellular location is the cytoplasm. The enzyme catalyses 3-deoxy-alpha-D-manno-oct-2-ulosonate + CTP = CMP-3-deoxy-beta-D-manno-octulosonate + diphosphate. It functions in the pathway nucleotide-sugar biosynthesis; CMP-3-deoxy-D-manno-octulosonate biosynthesis; CMP-3-deoxy-D-manno-octulosonate from 3-deoxy-D-manno-octulosonate and CTP: step 1/1. The protein operates within bacterial outer membrane biogenesis; lipopolysaccharide biosynthesis. Activates KDO (a required 8-carbon sugar) for incorporation into bacterial lipopolysaccharide in Gram-negative bacteria. This chain is 3-deoxy-manno-octulosonate cytidylyltransferase, found in Francisella philomiragia subsp. philomiragia (strain ATCC 25017 / CCUG 19701 / FSC 153 / O#319-036).